The primary structure comprises 396 residues: S-adenosylmethionine synthase (396 aa).

His15 is an ATP binding site. Residue Asp17 participates in Mg(2+) binding. Residue Glu43 coordinates K(+). Residues Glu56 and Gln99 each coordinate L-methionine. Residues 99-109 (QSADIALGVDR) are flexible loop. Residues 175-177 (DGK), 241-242 (RF), Asp250, 256-257 (RK), Ala273, and Lys277 each bind ATP. Residue Asp250 coordinates L-methionine. An L-methionine-binding site is contributed by Lys281.

Belongs to the AdoMet synthase family. As to quaternary structure, homotetramer; dimer of dimers. Mg(2+) is required as a cofactor. Requires K(+) as cofactor.

The protein localises to the cytoplasm. It catalyses the reaction L-methionine + ATP + H2O = S-adenosyl-L-methionine + phosphate + diphosphate. It participates in amino-acid biosynthesis; S-adenosyl-L-methionine biosynthesis; S-adenosyl-L-methionine from L-methionine: step 1/1. Functionally, catalyzes the formation of S-adenosylmethionine (AdoMet) from methionine and ATP. The overall synthetic reaction is composed of two sequential steps, AdoMet formation and the subsequent tripolyphosphate hydrolysis which occurs prior to release of AdoMet from the enzyme. This Desulfitobacterium hafniense (strain DSM 10664 / DCB-2) protein is S-adenosylmethionine synthase.